The following is a 343-amino-acid chain: 3-dehydroquinate synthase (343 aa).

NAD(+)-binding positions include 61–66 (SGEKYK), 95–99 (GVISD), 119–120 (TT), K132, K141, and 159–162 (FLKT). Positions 174, 231, and 248 each coordinate Zn(2+).

Belongs to the sugar phosphate cyclases superfamily. Dehydroquinate synthase family. The cofactor is Co(2+). Zn(2+) is required as a cofactor. It depends on NAD(+) as a cofactor.

It is found in the cytoplasm. It catalyses the reaction 7-phospho-2-dehydro-3-deoxy-D-arabino-heptonate = 3-dehydroquinate + phosphate. Its pathway is metabolic intermediate biosynthesis; chorismate biosynthesis; chorismate from D-erythrose 4-phosphate and phosphoenolpyruvate: step 2/7. Functionally, catalyzes the conversion of 3-deoxy-D-arabino-heptulosonate 7-phosphate (DAHP) to dehydroquinate (DHQ). The chain is 3-dehydroquinate synthase from Helicobacter pylori (strain P12).